Consider the following 623-residue polypeptide: Chaperone protein HtpG (623 aa).

The segment at 1–336 is a; substrate-binding; it reads MSETNTQKAA…TEDLPLNVSR (336 aa). Residues 337–546 form a b region; it reads EMLQATPVLA…DGGPDLTMQR (210 aa). The segment at 547–623 is c; sequence LMRRSGQAMP…ATLLAGPAAE (77 aa).

It belongs to the heat shock protein 90 family. In terms of assembly, homodimer.

It is found in the cytoplasm. Functionally, molecular chaperone. Has ATPase activity. The polypeptide is Chaperone protein HtpG (Gluconobacter oxydans (strain 621H) (Gluconobacter suboxydans)).